The primary structure comprises 128 residues: Large ribosomal subunit protein uL22 (128 aa).

This sequence belongs to the universal ribosomal protein uL22 family. Part of the 50S ribosomal subunit.

This protein binds specifically to 23S rRNA; its binding is stimulated by other ribosomal proteins, e.g. L4, L17, and L20. It is important during the early stages of 50S assembly. It makes multiple contacts with different domains of the 23S rRNA in the assembled 50S subunit and ribosome. Functionally, the globular domain of the protein is located near the polypeptide exit tunnel on the outside of the subunit, while an extended beta-hairpin is found that lines the wall of the exit tunnel in the center of the 70S ribosome. In Rhodopseudomonas palustris (strain BisB18), this protein is Large ribosomal subunit protein uL22.